We begin with the raw amino-acid sequence, 313 residues long: uncharacterized protein (313 aa).

It to B.subtilis YqxC and T.hyodysenteriae hemolysin TlyA.

This is an uncharacterized protein from Bacillus subtilis (strain 168).